Here is a 416-residue protein sequence, read N- to C-terminus: Serine hydroxymethyltransferase (416 aa).

Residues Leu-121 and 125 to 127 (GHL) contribute to the (6S)-5,6,7,8-tetrahydrofolate site. Lys-230 carries the post-translational modification N6-(pyridoxal phosphate)lysine.

Belongs to the SHMT family. In terms of assembly, homodimer. Pyridoxal 5'-phosphate serves as cofactor.

The protein localises to the cytoplasm. It catalyses the reaction (6R)-5,10-methylene-5,6,7,8-tetrahydrofolate + glycine + H2O = (6S)-5,6,7,8-tetrahydrofolate + L-serine. Its pathway is one-carbon metabolism; tetrahydrofolate interconversion. It participates in amino-acid biosynthesis; glycine biosynthesis; glycine from L-serine: step 1/1. Catalyzes the reversible interconversion of serine and glycine with tetrahydrofolate (THF) serving as the one-carbon carrier. This reaction serves as the major source of one-carbon groups required for the biosynthesis of purines, thymidylate, methionine, and other important biomolecules. Also exhibits THF-independent aldolase activity toward beta-hydroxyamino acids, producing glycine and aldehydes, via a retro-aldol mechanism. The polypeptide is Serine hydroxymethyltransferase (Nitrosomonas eutropha (strain DSM 101675 / C91 / Nm57)).